The sequence spans 196 residues: NADH-quinone oxidoreductase subunit C (196 aa).

It belongs to the complex I 30 kDa subunit family. As to quaternary structure, NDH-1 is composed of 14 different subunits. Subunits NuoB, C, D, E, F, and G constitute the peripheral sector of the complex.

It is found in the cell inner membrane. It carries out the reaction a quinone + NADH + 5 H(+)(in) = a quinol + NAD(+) + 4 H(+)(out). Functionally, NDH-1 shuttles electrons from NADH, via FMN and iron-sulfur (Fe-S) centers, to quinones in the respiratory chain. The immediate electron acceptor for the enzyme in this species is believed to be ubiquinone. Couples the redox reaction to proton translocation (for every two electrons transferred, four hydrogen ions are translocated across the cytoplasmic membrane), and thus conserves the redox energy in a proton gradient. In Rickettsia bellii (strain RML369-C), this protein is NADH-quinone oxidoreductase subunit C.